The primary structure comprises 127 residues: Promotilin (127 aa).

A signal peptide spans 1-25; sequence MLSRKAVAALLLVHVTAMLASQTEG. The tract at residues 41 to 67 is disordered; it reads REQNKRLRKSLRVQQRSKAAGRLEPQE.

This sequence belongs to the motilin family. As to expression, present in the gut mucosa with the exception of the gastric corpus. Also present in medulla oblongata, nucleus of the solitary tract, hypophysis, spinal cord, hypothalamus, and cerebellum but not in the cerebral cortex.

It is found in the secreted. Its function is as follows. Plays an important role in the regulation of interdigestive gastrointestinal motility and indirectly causes rhythmic contraction of duodenal and colonic smooth muscle. This Cavia porcellus (Guinea pig) protein is Promotilin (MLN).